We begin with the raw amino-acid sequence, 98 residues long: NADH-ubiquinone oxidoreductase chain 4L (98 aa).

Transmembrane regions (helical) follow at residues 1–21 (MSLT…GLLM), 29–49 (SLLC…ITIL), and 61–81 (IILL…LVMV).

The protein belongs to the complex I subunit 4L family. In terms of assembly, core subunit of respiratory chain NADH dehydrogenase (Complex I) which is composed of 45 different subunits.

The protein localises to the mitochondrion inner membrane. The catalysed reaction is a ubiquinone + NADH + 5 H(+)(in) = a ubiquinol + NAD(+) + 4 H(+)(out). Its function is as follows. Core subunit of the mitochondrial membrane respiratory chain NADH dehydrogenase (Complex I) which catalyzes electron transfer from NADH through the respiratory chain, using ubiquinone as an electron acceptor. Part of the enzyme membrane arm which is embedded in the lipid bilayer and involved in proton translocation. This is NADH-ubiquinone oxidoreductase chain 4L (MT-ND4L) from Mystacina tuberculata (New Zealand lesser short-tailed bat).